The following is a 704-amino-acid chain: Polyribonucleotide nucleotidyltransferase (704 aa).

Mg(2+) contacts are provided by D486 and D492. In terms of domain architecture, KH spans 553-612; that stretch reads PRIYTMKINPEKIKDVIGKGGSVIRALTDETGTTIEIEDDGTIKIAATDGDKAKHAIRRI. The 69-residue stretch at 622–690 folds into the S1 motif domain; that stretch reads GRIYAGKVTR…RQGRIRLSIK (69 aa).

This sequence belongs to the polyribonucleotide nucleotidyltransferase family. Component of the RNA degradosome, which is a multiprotein complex involved in RNA processing and mRNA degradation. The cofactor is Mg(2+).

The protein resides in the cytoplasm. It carries out the reaction RNA(n+1) + phosphate = RNA(n) + a ribonucleoside 5'-diphosphate. Involved in mRNA degradation. Catalyzes the phosphorolysis of single-stranded polyribonucleotides processively in the 3'- to 5'-direction. This is Polyribonucleotide nucleotidyltransferase from Yersinia pseudotuberculosis serotype IB (strain PB1/+).